The following is a 329-amino-acid chain: BTB/POZ domain-containing adapter for CUL3-mediated RhoA degradation protein 1 (329 aa).

The interval 1–31 (MSAEASGPAPAAAECLESPSPSSVEPGSPSY) is disordered. Positions 41–109 (KYVKLNVGGS…LRDGSVPLPE (69 aa)) constitute a BTB domain.

Belongs to the BACURD family. As to quaternary structure, homotetramer; forms a two-fold symmetric tetramer in solution. Interacts with CUL3; interaction is direct and forms a 5:5 heterodecamer. Component of the BCR(KCTD13) E3 ubiquitin ligase complex, at least composed of CUL3, KCTD13/BACURD1 and RBX1. Interacts with RHOA; with a preference for RhoA-GDP. Interacts with POLD2 and PCNA. Interacts with SPRTN.

It is found in the nucleus. The protein operates within protein modification; protein ubiquitination. In terms of biological role, substrate-specific adapter of a BCR (BTB-CUL3-RBX1) E3 ubiquitin-protein ligase complex required for synaptic transmission. The BCR(KCTD13) E3 ubiquitin ligase complex mediates the ubiquitination of RHOA, leading to its degradation by the proteasome, thereby regulating the actin cytoskeleton and promoting synaptic transmission. This chain is BTB/POZ domain-containing adapter for CUL3-mediated RhoA degradation protein 1 (Kctd13), found in Mus musculus (Mouse).